A 1464-amino-acid chain; its full sequence is DNA polymerase III PolC-type (1464 aa).

Positions 426-582 constitute an Exonuclease domain; the sequence is YVVFDVETTG…YDAEATGRLL (157 aa).

It belongs to the DNA polymerase type-C family. PolC subfamily.

It is found in the cytoplasm. The catalysed reaction is DNA(n) + a 2'-deoxyribonucleoside 5'-triphosphate = DNA(n+1) + diphosphate. Required for replicative DNA synthesis. This DNA polymerase also exhibits 3' to 5' exonuclease activity. The polypeptide is DNA polymerase III PolC-type (Streptococcus thermophilus (strain CNRZ 1066)).